Here is a 217-residue protein sequence, read N- to C-terminus: Imidazole glycerol phosphate synthase subunit HisH (217 aa).

One can recognise a Glutamine amidotransferase type-1 domain in the interval 1-212 (MLAILDYKAG…YEYCRQSRQE (212 aa)). Residue cysteine 79 is the Nucleophile of the active site. Catalysis depends on residues histidine 187 and glutamate 189.

As to quaternary structure, heterodimer of HisH and HisF.

It localises to the cytoplasm. It catalyses the reaction 5-[(5-phospho-1-deoxy-D-ribulos-1-ylimino)methylamino]-1-(5-phospho-beta-D-ribosyl)imidazole-4-carboxamide + L-glutamine = D-erythro-1-(imidazol-4-yl)glycerol 3-phosphate + 5-amino-1-(5-phospho-beta-D-ribosyl)imidazole-4-carboxamide + L-glutamate + H(+). It carries out the reaction L-glutamine + H2O = L-glutamate + NH4(+). It functions in the pathway amino-acid biosynthesis; L-histidine biosynthesis; L-histidine from 5-phospho-alpha-D-ribose 1-diphosphate: step 5/9. IGPS catalyzes the conversion of PRFAR and glutamine to IGP, AICAR and glutamate. The HisH subunit catalyzes the hydrolysis of glutamine to glutamate and ammonia as part of the synthesis of IGP and AICAR. The resulting ammonia molecule is channeled to the active site of HisF. This chain is Imidazole glycerol phosphate synthase subunit HisH, found in Desulfovibrio desulfuricans (strain ATCC 27774 / DSM 6949 / MB).